The primary structure comprises 203 residues: Non-specific lipid transfer protein GPI-anchored 20 (203 aa).

Residues Met-1 to Gly-21 form the signal peptide. 4 disulfides stabilise this stretch: Cys-29/Cys-74, Cys-40/Cys-58, Cys-59/Cys-99, and Cys-72/Cys-108. Asn-46, Asn-50, and Asn-88 each carry an N-linked (GlcNAc...) asparagine glycan. The tract at residues Gly-119–Ser-182 is disordered. Composition is skewed to polar residues over residues Ala-144–Phe-156 and Asp-169–Thr-179. A lipid anchor (GPI-anchor amidated serine) is attached at Ser-172. Positions Thr-173–Tyr-203 are cleaved as a propeptide — removed in mature form.

This sequence belongs to the plant LTP family. In terms of tissue distribution, expressed in seedlings, preferentially in hypocotyls and roots. Also observed in siliques and sepals.

Its subcellular location is the cell membrane. Functionally, probable lipid transfer protein. The chain is Non-specific lipid transfer protein GPI-anchored 20 from Arabidopsis thaliana (Mouse-ear cress).